We begin with the raw amino-acid sequence, 72 residues long: UPF0154 protein LBA1278 (72 aa).

A helical membrane pass occupies residues 3–23; the sequence is LGLAIFLIIIALLVGATAGFY.

Belongs to the UPF0154 family.

It localises to the cell membrane. In Lactobacillus acidophilus (strain ATCC 700396 / NCK56 / N2 / NCFM), this protein is UPF0154 protein LBA1278.